The primary structure comprises 205 residues: Protein N-terminal glutamine amidohydrolase (205 aa).

Residues C20, H74, and D90 contribute to the active site.

Belongs to the NTAQ1 family. Monomer.

The catalysed reaction is N-terminal L-glutaminyl-[protein] + H2O = N-terminal L-glutamyl-[protein] + NH4(+). Functionally, mediates the side-chain deamidation of N-terminal glutamine residues to glutamate, an important step in N-end rule pathway of protein degradation. Conversion of the resulting N-terminal glutamine to glutamate renders the protein susceptible to arginylation, polyubiquitination and degradation as specified by the N-end rule. Does not act on substrates with internal or C-terminal glutamine and does not act on non-glutamine residues in any position. This chain is Protein N-terminal glutamine amidohydrolase (tun), found in Drosophila ananassae (Fruit fly).